The chain runs to 113 residues: Hydrogenase maturation factor HypA (113 aa).

Position 2 (histidine 2) interacts with Ni(2+). Zn(2+)-binding residues include cysteine 73, cysteine 76, cysteine 89, and cysteine 92.

The protein belongs to the HypA/HybF family.

Its function is as follows. Involved in the maturation of [NiFe] hydrogenases. Required for nickel insertion into the metal center of the hydrogenase. The protein is Hydrogenase maturation factor HypA of Chlorobium phaeobacteroides (strain BS1).